The primary structure comprises 332 residues: Ephrin-B2a (332 aa).

The signal sequence occupies residues 1-24 (MGDSLWRYYFGVLVIACKVNLSRA). Asn20 and Asn33 each carry an N-linked (GlcNAc...) asparagine glycan. The Ephrin RBD domain maps to 25-161 (LILDSIYWNT…TKSMKIIMKV (137 aa)). Topologically, residues 25 to 225 (LILDSIYWNT…VIGSEVALFA (201 aa)) are extracellular. Intrachain disulfides connect Cys59-Cys98 and Cys86-Cys150. Residue Asn136 is glycosylated (N-linked (GlcNAc...) asparagine). Residues 162–212 (GQNPSDPISPKDYPTSYPPKHPDLGGKDSKSNEVLKPDASPHGEDKGDGNK) form a disordered region. A compositionally biased stretch (basic and acidic residues) spans 181–210 (KHPDLGGKDSKSNEVLKPDASPHGEDKGDG). N-linked (GlcNAc...) asparagine glycosylation occurs at Asn211. A helical transmembrane segment spans residues 226 to 246 (CIASASVIVIIIIIMLVFLLL). Residues 247–332 (KYRRRHRKHS…QSPANIYYKV (86 aa)) lie on the Cytoplasmic side of the membrane. The segment at 255–285 (HSPQHATTLSLSTLATPKRGGSGGNNNGSEP) is disordered. Residues 260 to 270 (ATTLSLSTLAT) show a composition bias toward low complexity. The PDZ-binding signature appears at 330–332 (YKV).

The protein belongs to the ephrin family. Binds to the receptor tyrosine kinase ephb4. Post-translationally, inducible phosphorylation of tyrosine residues in the cytoplasmic domain.

It is found in the cell membrane. In terms of biological role, cell surface transmembrane ligand for Eph receptors, a family of receptor tyrosine kinases which are crucial for migration, repulsion and adhesion during neuronal, vascular and epithelial development. Binds promiscuously Eph receptors residing on adjacent cells, leading to contact-dependent bidirectional signaling into neighboring cells. The signaling pathway downstream of the receptor is referred to as forward signaling while the signaling pathway downstream of the ephrin ligand is referred to as reverse signaling. Together with ephb4 may play a central role in heart morphogenesis and angiogenesis through regulation of cell adhesion and cell migration. The polypeptide is Ephrin-B2a (efnb2a) (Danio rerio (Zebrafish)).